A 325-amino-acid polypeptide reads, in one-letter code: MAVGNNTQRSYSIIPCFIFVELVIMAGTVLLAYYFECTDTFQVHIQGFFCQDGDLMKPYPGTEEESFITPLVLYCVLAATPTAIIFIGEISMYFIKSTRESLIAQEKTILTGECCYLNPLLRRIIRFTGVFAFGLFATDIFVNAGQVVTGHLTPYFLTVCKPNYTSADCQAHHQFINNGNICTGDLEVIEKARRSFPSKHAALSIYSALYATMYITSTIKTKSSRLAKPVLCLGTLCTAFLTGLNRVSEYRNHCSDVIAGFILGTAVALFLGMCVVHNFKGTQGSPSKPKPEDPRGVPLMAFPRIESPLETLSAQNHSASMTEVT.

The N-linked (GlcNAc...) asparagine glycan is linked to Asn5. 3 consecutive transmembrane segments (helical) span residues 13–33 (IIPC…LLAY), 67–87 (FITP…IIFI), and 127–147 (FTGV…AGQV). An N-linked (GlcNAc...) asparagine glycan is attached at Asn163. 3 helical membrane passes run 201 to 218 (AALS…ITST), 230 to 247 (VLCL…LNRV), and 257 to 277 (VIAG…CVVH). Ser307 bears the Phosphoserine mark. Residue Asn316 is glycosylated (N-linked (GlcNAc...) asparagine).

This sequence belongs to the PA-phosphatase related phosphoesterase family.

The protein localises to the cell membrane. Its subcellular location is the cell projection. The protein resides in the neuron projection. May play a role in neurite outgrowth and neurogenesis. The chain is Phospholipid phosphatase-related protein type 1 from Homo sapiens (Human).